Here is a 361-residue protein sequence, read N- to C-terminus: Phenylalanine 4-monooxygenase, chloroplastic (361 aa).

The transit peptide at 1–55 (MLALRQGALLLSARGGQTTHDNLQLCAGPSRRPRARWISSAPRPSTLVERHIRPQ) directs the protein to the chloroplast. Positions 47 to 67 (LVERHIRPQASTASDATTSTS) are disordered. The segment covering 56–67 (ASTASDATTSTS) has biased composition (low complexity). Fe cation is bound by residues His227, His232, and Glu272.

The protein belongs to the biopterin-dependent aromatic amino acid hydroxylase family. Requires Fe(2+) as cofactor.

The protein localises to the plastid. Its subcellular location is the chloroplast. The catalysed reaction is (6R)-L-erythro-5,6,7,8-tetrahydrobiopterin + L-phenylalanine + O2 = (4aS,6R)-4a-hydroxy-L-erythro-5,6,7,8-tetrahydrobiopterin + L-tyrosine. Its function is as follows. Catalyzes the hydroxylation of L-phenylalanine to L-tyrosine. Can functionally complement an Escherichia coli tyrosine auxotroph. This is Phenylalanine 4-monooxygenase, chloroplastic from Chlamydomonas reinhardtii (Chlamydomonas smithii).